The chain runs to 424 residues: UPF0229 protein Ping_2705 (424 aa).

The tract at residues 77–108 (PGNQDFIGGDRIERPPSGGAGGSGSGASDSGK) is disordered.

This sequence belongs to the UPF0229 family.

The chain is UPF0229 protein Ping_2705 from Psychromonas ingrahamii (strain DSM 17664 / CCUG 51855 / 37).